The sequence spans 76 residues: Conotoxin Im6.9 (76 aa).

An N-terminal signal peptide occupies residues 1–19 (MEKLTILLLVTAVLMSTQA). A propeptide spanning residues 20–45 (LMQSGIEKRQRAKIKFFSKRKTTAER) is cleaved from the precursor. 3 cysteine pairs are disulfide-bonded: C51/C65, C58/C69, and C64/C73.

This sequence belongs to the conotoxin O2 superfamily. In terms of tissue distribution, expressed by the venom duct.

It is found in the secreted. Functionally, probable neurotoxin. The polypeptide is Conotoxin Im6.9 (Conus imperialis (Imperial cone)).